The primary structure comprises 407 residues: MTYPNLLDHFLTYVKVNTRSDEHSTTTPSTQSQVDFATNVLIPEMKRVGLQNVYYLPNGFAIGTLPANDPSLTRKIGFISHMDTADFNAEGVNPQVIENYDGGVIELGNSGFKLDPADFKSLEKYPGQTLITTDGTTLLGADDKSGIAEIMTAIEYLTAHPEIKHCEIRVGFGPDEEIGVGANKFDAEDFDVDFAYTVDGGPLGELQYETFSAAGAELHFQGRNVHPGTAKGQMVNALQLAIDFHNQLPENDRPELTEGYQGFYHLMDVTGSVEETRASYIIRDFEKDAFEARKASMQSIADKMNEELGSDRVTLNLTDQYYNMKEVIEKDMTPITIAKAVMEDLGITPIIEPIRGGTDGSKISFMGIPTPNIFAGGENMHGRFEYVSLQTMERAVDTIIGIVAYKG.

Position 81 (His-81) interacts with Zn(2+). The active site involves Asp-83. Residue Asp-142 coordinates Zn(2+). Glu-176 (proton acceptor) is an active-site residue. Residues Glu-177, Asp-199, and His-381 each contribute to the Zn(2+) site.

This sequence belongs to the peptidase M20B family. Zn(2+) serves as cofactor.

It localises to the cytoplasm. The catalysed reaction is Release of the N-terminal residue from a tripeptide.. Cleaves the N-terminal amino acid of tripeptides. The protein is Peptidase T of Streptococcus pneumoniae (strain Taiwan19F-14).